We begin with the raw amino-acid sequence, 241 residues long: Ribonuclease HII (241 aa).

Positions 27-227 (GPVAGVDEAG…REARSLRLED (201 aa)) constitute an RNase H type-2 domain. A divalent metal cation-binding residues include aspartate 33, glutamate 34, and aspartate 128.

It belongs to the RNase HII family. Requires Mn(2+) as cofactor. It depends on Mg(2+) as a cofactor.

It localises to the cytoplasm. It carries out the reaction Endonucleolytic cleavage to 5'-phosphomonoester.. Its function is as follows. Endonuclease that specifically degrades the RNA of RNA-DNA hybrids. The polypeptide is Ribonuclease HII (Frankia alni (strain DSM 45986 / CECT 9034 / ACN14a)).